The following is a 1039-amino-acid chain: Multidrug resistance protein MdtB (1039 aa).

11 helical membrane passes run 15–37, 345–362, 367–389, 396–418, 438–460, 472–494, 535–557, 866–888, 908–930, 967–989, and 999–1021; these read LFIM…GIIG, FELM…YLFL, ATII…MVFL, LTLM…VIEN, GEIG…PLLF, FAIT…TPMM, HPWL…WVFI, VWLI…ESFI, LMIA…IGIV, ILMT…GVGA, and MVGG…YLLF.

The protein belongs to the resistance-nodulation-cell division (RND) (TC 2.A.6) family. MdtB subfamily. Part of a tripartite efflux system composed of MdtA, MdtB and MdtC. MdtB forms a heteromultimer with MdtC.

It localises to the cell inner membrane. The protein is Multidrug resistance protein MdtB of Shigella flexneri.